A 165-amino-acid chain; its full sequence is Endoribonuclease YbeY (165 aa).

Positions 130, 134, and 140 each coordinate Zn(2+).

Belongs to the endoribonuclease YbeY family. Requires Zn(2+) as cofactor.

It is found in the cytoplasm. Single strand-specific metallo-endoribonuclease involved in late-stage 70S ribosome quality control and in maturation of the 3' terminus of the 16S rRNA. In Streptococcus pyogenes serotype M28 (strain MGAS6180), this protein is Endoribonuclease YbeY.